A 925-amino-acid chain; its full sequence is Coronin-7 (925 aa).

4 WD repeats span residues 75–115, 124–163, 166–205, and 209–253; these read CHSD…QALP, PEDLPVEVLQFHPTSDGILVSAAGTTVKVWDAAKQQPLTE, AHGDLVQSAVWSRDGALVGTACKDKQLRIFDPRTKPQASQ, and AHEN…SALA. 2 disordered regions span residues 196–216 and 399–465; these read DPRTKPQASQSTQAHENSRDS and LVPP…SLQS. Over residues 201–210 the composition is skewed to polar residues; sequence PQASQSTQAH. Low complexity predominate over residues 429 to 460; it reads SSPPSSLTSPSTPSSLGPTLSSTSGIGTGPSL. A phosphoserine mark is found at S462 and S465. K472 is covalently cross-linked (Glycyl lysine isopeptide (Lys-Gly) (interchain with G-Cter in ubiquitin)). 3 WD repeats span residues 542 to 582, 592 to 632, and 635 to 674; these read QNGA…LEEV, GHME…DRLK, and GHQDQIFSLAWSPDGQQLATVCKDGRVRVYRPRSGPEPLQ. K680 participates in a covalent cross-link: Glycyl lysine isopeptide (Lys-Gly) (interchain with G-Cter in ubiquitin). One copy of the WD 8 repeat lies at 728 to 768; that stretch reads DVAPSTLVPSYEPRHWPGAPDWQGDARVFLYELLPESPFFM. The tract at residues 857–925 is disordered; it reads LQPPDMSPVS…FEGVDEDEWD (69 aa). Low complexity predominate over residues 866 to 882; that stretch reads SQAPREAPARRAPSSAQ. The span at 884-896 shows a compositional bias: basic and acidic residues; that stretch reads LEEKSDQQKKEEL. S915 is modified (phosphoserine).

This sequence belongs to the WD repeat coronin family. As to quaternary structure, interacts with clathrin adapter AP1 complex. This interaction takes place at Golgi membranes and not AP1-positive endosomal membranes. Interacts (when ubiquitinated at Lys-472) with EPS15. Post-translationally, the membrane-associated form is phosphorylated on tyrosine residues. Ubiquitinated via 'Lys-33'-linked ubiquitin chains by the BCR(KLHL20) E3 ubiquitin ligase complex: 'Lys-33'-linked ubiquitination promotes interaction with EPS15 and facilitates actin polymerization at the trans-Golgi network, thereby facilitating post-Golgi trafficking. Deubiquitinated by ZRANB1/TRABID.

The protein resides in the golgi apparatus membrane. Its subcellular location is the golgi apparatus. It is found in the trans-Golgi network. It localises to the cytoplasmic vesicle. The protein localises to the cytoplasm. The protein resides in the cytosol. Functionally, F-actin regulator involved in anterograde Golgi to endosome transport: upon ubiquitination via 'Lys-33'-linked ubiquitin chains by the BCR(KLHL20) E3 ubiquitin ligase complex, interacts with EPS15 and localizes to the trans-Golgi network, where it promotes actin polymerization, thereby facilitating post-Golgi trafficking. May play a role in the maintenance of the Golgi apparatus morphology. The protein is Coronin-7 (CORO7) of Pongo abelii (Sumatran orangutan).